A 155-amino-acid polypeptide reads, in one-letter code: MASASPSSSRRLTKEYSDLREHPIPDIRVNLVDDNLFHWACTALGPSDSVYAGGKFHFSLKFPLDYPFQPPTIEFTTRIYHPNFDSEGNVCLAILKQQVFKPSIKLRSVLEQILQLLREPNPDDPLVASIAEQYRNDRPSFDKIARDYVEQFAKS.

The UBC core domain occupies 7 to 154 (SSSRRLTKEY…ARDYVEQFAK (148 aa)). Residue Cys-91 is the Glycyl thioester intermediate of the active site.

This sequence belongs to the ubiquitin-conjugating enzyme family.

It carries out the reaction S-ubiquitinyl-[E1 ubiquitin-activating enzyme]-L-cysteine + [E2 ubiquitin-conjugating enzyme]-L-cysteine = [E1 ubiquitin-activating enzyme]-L-cysteine + S-ubiquitinyl-[E2 ubiquitin-conjugating enzyme]-L-cysteine.. It participates in protein modification; protein ubiquitination. Its function is as follows. Catalyzes the covalent attachment of ubiquitin to other proteins. Mediates the selective degradation of short-lived and abnormal proteins. This is Ubiquitin-conjugating enzyme E2 14 (ubc14) from Schizosaccharomyces pombe (strain 972 / ATCC 24843) (Fission yeast).